Here is a 735-residue protein sequence, read N- to C-terminus: Ion-translocating oxidoreductase complex subunit C (735 aa).

4Fe-4S ferredoxin-type domains lie at 368-397 and 407-436; these read MGAP…QQLY and KATA…VQYF. Residues C377, C380, C383, C387, C416, C419, C422, and C426 each coordinate [4Fe-4S] cluster. The interval 562 to 713 is disordered; sequence AIARAKARKQ…AEPADPRKAA (152 aa).

The protein belongs to the 4Fe4S bacterial-type ferredoxin family. RnfC subfamily. In terms of assembly, the complex is composed of six subunits: RsxA, RsxB, RsxC, RsxD, RsxE and RsxG. [4Fe-4S] cluster serves as cofactor.

The protein resides in the cell inner membrane. Part of a membrane-bound complex that couples electron transfer with translocation of ions across the membrane. Required to maintain the reduced state of SoxR. This Salmonella newport (strain SL254) protein is Ion-translocating oxidoreductase complex subunit C.